Here is a 391-residue protein sequence, read N- to C-terminus: NADH-quinone oxidoreductase subunit D (391 aa).

The protein belongs to the complex I 49 kDa subunit family. As to quaternary structure, NDH-1 is composed of 14 different subunits. Subunits NuoB, C, D, E, F, and G constitute the peripheral sector of the complex.

Its subcellular location is the cell inner membrane. The catalysed reaction is a quinone + NADH + 5 H(+)(in) = a quinol + NAD(+) + 4 H(+)(out). In terms of biological role, NDH-1 shuttles electrons from NADH, via FMN and iron-sulfur (Fe-S) centers, to quinones in the respiratory chain. The immediate electron acceptor for the enzyme in this species is believed to be ubiquinone. Couples the redox reaction to proton translocation (for every two electrons transferred, four hydrogen ions are translocated across the cytoplasmic membrane), and thus conserves the redox energy in a proton gradient. This is NADH-quinone oxidoreductase subunit D from Rickettsia bellii (strain OSU 85-389).